The sequence spans 446 residues: Adenylosuccinate synthetase (446 aa).

GTP contacts are provided by residues 20-26 (GDEGKGK) and 48-50 (GHT). Aspartate 21 (proton acceptor) is an active-site residue. The Mg(2+) site is built by aspartate 21 and glycine 48. Residues 21-24 (DEGK), 46-49 (NAGH), threonine 137, arginine 151, glutamine 232, threonine 247, and arginine 319 contribute to the IMP site. Residue histidine 49 is the Proton donor of the active site. 315 to 321 (SVTGRPR) contacts substrate. Residues arginine 321, 347 to 349 (KLD), and 429 to 431 (STG) contribute to the GTP site.

It belongs to the adenylosuccinate synthetase family. Homodimer. Mg(2+) serves as cofactor.

It localises to the cytoplasm. The enzyme catalyses IMP + L-aspartate + GTP = N(6)-(1,2-dicarboxyethyl)-AMP + GDP + phosphate + 2 H(+). It participates in purine metabolism; AMP biosynthesis via de novo pathway; AMP from IMP: step 1/2. In terms of biological role, plays an important role in the de novo pathway of purine nucleotide biosynthesis. Catalyzes the first committed step in the biosynthesis of AMP from IMP. The sequence is that of Adenylosuccinate synthetase from Ralstonia pickettii (strain 12J).